Here is a 125-residue protein sequence, read N- to C-terminus: uncharacterized protein (125 aa).

This is an uncharacterized protein from Saccharomyces cerevisiae (strain ATCC 204508 / S288c) (Baker's yeast).